A 200-amino-acid chain; its full sequence is 3-isopropylmalate dehydratase small subunit (200 aa).

This sequence belongs to the LeuD family. LeuD type 1 subfamily. Heterodimer of LeuC and LeuD.

It catalyses the reaction (2R,3S)-3-isopropylmalate = (2S)-2-isopropylmalate. It participates in amino-acid biosynthesis; L-leucine biosynthesis; L-leucine from 3-methyl-2-oxobutanoate: step 2/4. Catalyzes the isomerization between 2-isopropylmalate and 3-isopropylmalate, via the formation of 2-isopropylmaleate. This is 3-isopropylmalate dehydratase small subunit from Actinobacillus pleuropneumoniae serotype 3 (strain JL03).